A 363-amino-acid chain; its full sequence is 3-dehydroquinate synthase (363 aa).

Residues 72–77 (SGEKEK), 130–131 (TT), lysine 142, and lysine 151 each bind NAD(+). Residues glutamate 184, histidine 247, and histidine 264 each coordinate Zn(2+).

Belongs to the sugar phosphate cyclases superfamily. Dehydroquinate synthase family. Co(2+) is required as a cofactor. It depends on Zn(2+) as a cofactor. NAD(+) serves as cofactor.

It is found in the cytoplasm. It catalyses the reaction 7-phospho-2-dehydro-3-deoxy-D-arabino-heptonate = 3-dehydroquinate + phosphate. It functions in the pathway metabolic intermediate biosynthesis; chorismate biosynthesis; chorismate from D-erythrose 4-phosphate and phosphoenolpyruvate: step 2/7. Its function is as follows. Catalyzes the conversion of 3-deoxy-D-arabino-heptulosonate 7-phosphate (DAHP) to dehydroquinate (DHQ). This is 3-dehydroquinate synthase from Bacillus thuringiensis (strain Al Hakam).